Here is a 273-residue protein sequence, read N- to C-terminus: Nitrogenase iron protein 4 (273 aa).

8–15 (GKGGIGKS) is an ATP binding site. Cys-94 lines the [4Fe-4S] cluster pocket. Arg-97 is modified (ADP-ribosylarginine; by dinitrogenase reductase ADP-ribosyltransferase). Position 129 (Cys-129) interacts with [4Fe-4S] cluster.

Belongs to the NifH/BchL/ChlL family. As to quaternary structure, homodimer. Requires [4Fe-4S] cluster as cofactor. The reversible ADP-ribosylation of Arg-97 inactivates the nitrogenase reductase and regulates nitrogenase activity.

It catalyses the reaction N2 + 8 reduced [2Fe-2S]-[ferredoxin] + 16 ATP + 16 H2O = H2 + 8 oxidized [2Fe-2S]-[ferredoxin] + 2 NH4(+) + 16 ADP + 16 phosphate + 6 H(+). Its function is as follows. The key enzymatic reactions in nitrogen fixation are catalyzed by the nitrogenase complex, which has 2 components: the iron protein and the molybdenum-iron protein. The chain is Nitrogenase iron protein 4 (nifH4) from Clostridium pasteurianum.